The following is a 264-amino-acid chain: Small ribosomal subunit protein eS1 (264 aa).

A disordered region spans residues 233 to 264 (GEGGGAGKPSGDEAGAKVERADGYEPPVQESV). Residues 242 to 255 (SGDEAGAKVERADG) are compositionally biased toward basic and acidic residues.

Belongs to the eukaryotic ribosomal protein eS1 family. In terms of assembly, component of the small ribosomal subunit. Mature ribosomes consist of a small (40S) and a large (60S) subunit. The 40S subunit contains about 33 different proteins and 1 molecule of RNA (18S). The 60S subunit contains about 49 different proteins and 3 molecules of RNA (25S, 5.8S and 5S).

The protein resides in the cytoplasm. In Eimeria tenella (Coccidian parasite), this protein is Small ribosomal subunit protein eS1.